The sequence spans 354 residues: Methionine import ATP-binding protein MetN (354 aa).

An ABC transporter domain is found at 8–250 (LDHIDITFRQ…PKEALTQEFI (243 aa)). Residue 42–49 (GYSGAGKS) participates in ATP binding.

The protein belongs to the ABC transporter superfamily. Methionine importer (TC 3.A.1.24) family. In terms of assembly, the complex is composed of two ATP-binding proteins (MetN), two transmembrane proteins (MetI) and a solute-binding protein (MetQ).

The protein resides in the cell membrane. It catalyses the reaction L-methionine(out) + ATP + H2O = L-methionine(in) + ADP + phosphate + H(+). The catalysed reaction is D-methionine(out) + ATP + H2O = D-methionine(in) + ADP + phosphate + H(+). Functionally, part of the ABC transporter complex MetNIQ involved in methionine import. Responsible for energy coupling to the transport system. In Streptococcus pyogenes serotype M12 (strain MGAS2096), this protein is Methionine import ATP-binding protein MetN.